The primary structure comprises 366 residues: Ribosomal RNA large subunit methyltransferase M (366 aa).

S-adenosyl-L-methionine-binding positions include Ser188, 221–224 (CPGG), Asp240, Asp260, and Asp277. Lys306 functions as the Proton acceptor in the catalytic mechanism.

This sequence belongs to the class I-like SAM-binding methyltransferase superfamily. RNA methyltransferase RlmE family. RlmM subfamily. Monomer.

Its subcellular location is the cytoplasm. The enzyme catalyses cytidine(2498) in 23S rRNA + S-adenosyl-L-methionine = 2'-O-methylcytidine(2498) in 23S rRNA + S-adenosyl-L-homocysteine + H(+). In terms of biological role, catalyzes the 2'-O-methylation at nucleotide C2498 in 23S rRNA. This chain is Ribosomal RNA large subunit methyltransferase M, found in Salmonella gallinarum (strain 287/91 / NCTC 13346).